The chain runs to 55 residues: Ferredoxin (55 aa).

2 consecutive 4Fe-4S ferredoxin-type domains span residues Tyr-2–Asp-27 and Ser-28–Lys-55. [4Fe-4S] cluster contacts are provided by Cys-8, Cys-11, Cys-14, Cys-18, Cys-37, Cys-40, Cys-43, and Cys-47.

Requires [4Fe-4S] cluster as cofactor.

In terms of biological role, ferredoxins are iron-sulfur proteins that transfer electrons in a wide variety of metabolic reactions. In Acetivibrio thermocellus (Hungateiclostridium thermocellum), this protein is Ferredoxin.